Reading from the N-terminus, the 130-residue chain is Blasticidin-S deaminase (130 aa).

The 129-residue stretch at 1–129 (MPLSQEESTL…ELLPSGYMNR (129 aa)) folds into the CMP/dCMP-type deaminase domain. Ser-28 is a substrate binding site. A Zn(2+)-binding site is contributed by Cys-54. Residue Glu-56 is the Proton donor of the active site. Residue Arg-82 participates in substrate binding. Cys-88 and Cys-91 together coordinate Zn(2+). Tyr-126 is a substrate binding site.

It belongs to the cytidine and deoxycytidylate deaminase family. In terms of assembly, homotetramer. Requires Zn(2+) as cofactor.

It catalyses the reaction blasticidin S + H2O + H(+) = deaminohydroxyblasticidin S + NH4(+). In terms of biological role, catalyzes the deamination of the cytosine moiety of the antibiotics blasticidin S, cytomycin and acetylblasticidin S. This chain is Blasticidin-S deaminase (bsd), found in Aspergillus terreus (strain NIH 2624 / FGSC A1156).